We begin with the raw amino-acid sequence, 113 residues long: UPF0482 protein YnfB (113 aa).

A signal peptide spans 1–28 (MKITLSKRIGLLAFLLPCALALSTTVHA).

The protein belongs to the UPF0482 family.

In Escherichia coli O127:H6 (strain E2348/69 / EPEC), this protein is UPF0482 protein YnfB.